The chain runs to 1339 residues: Transcription factor tau subunit sfc3 (1339 aa).

The tract at residues 470 to 515 is disordered; sequence MESNAEVSPDGMTLLPRKRGRPRKSANISVTSSPIRPSKNENNLPS. Residues 485–497 constitute a DNA-binding region (a.T hook); sequence PRKRGRPRKSANI. The segment covering 495–514 has biased composition (polar residues); sequence ANISVTSSPIRPSKNENNLP. Phosphoserine is present on residues S595 and S596. The tract at residues 791 to 826 is disordered; the sequence is RRKSMPAEIKRHKESSETKPVDKEEVKKNEKEKDDP. Basic and acidic residues predominate over residues 798–826; sequence EIKRHKESSETKPVDKEEVKKNEKEKDDP.

In terms of assembly, component of the TFIIIC complex including sfc1, sfc3, sfc4, sfc6 and sfc7. The subunits are organized in two globular domains, tauA and tauB, connected by a proteolysis-sensitive and flexible linker. Interacts with sfc1, sfc4 and sfc6.

It localises to the nucleus envelope. Functionally, TFIIIC mediates tRNA and 5S RNA gene activation by binding to intragenic promoter elements. Upstream of the transcription start site, TFIIIC assembles the initiation complex TFIIIB-TFIIIC-tDNA, which is sufficient for RNA polymerase III recruitment and function. Part of the tauB domain of TFIIIC that binds boxB DNA promoter sites of tRNA and similar genes. Cooperates with sfc6 in DNA binding. Localizes to chromatin insulator sequence without recruiting RNA polymerase III and plays a role in nuclear organization. The polypeptide is Transcription factor tau subunit sfc3 (Schizosaccharomyces pombe (strain 972 / ATCC 24843) (Fission yeast)).